The chain runs to 1168 residues: TBC1 domain family member 1 (1168 aa).

Serine 146 is subject to Phosphoserine. Residues 203-238 (VSGSRGSESPRPNPPHAAPTGSQEPVRRPMRKSFSQ) form a disordered region. Serine 235 is subject to Phosphoserine; by PKB/AKT1. A Phosphoserine modification is found at serine 237. The PID domain occupies 246-404 (FRKELQDGGL…LHKLCERIEG (159 aa)). The residue at position 503 (serine 503) is a Phosphoserine. Position 505 is a phosphothreonine; by PKB/AKT1 (threonine 505). Phosphoserine is present on residues serine 507, serine 525, and serine 527. Residues 532 to 542 (SSLSSTLSNTS) show a composition bias toward low complexity. Disordered stretches follow at residues 532 to 551 (SSLSSTLSNTSKEPSVCEKE) and 564 to 587 (GSSEDLSSDSESHLPEEPAPLSPQ). A phosphoserine mark is found at serine 565, serine 566, serine 570, serine 571, and serine 585. Threonine 596 is modified (phosphothreonine). Serine 614 carries the phosphoserine modification. Serine 627 carries the post-translational modification Phosphoserine; by PKB/AKT1. Disordered stretches follow at residues 628 to 658 (VSTETPHERKDFESKANHLGDSGGTPVKTRR) and 678 to 717 (SSSRYEDYSELGELPPRSPLEPVCEDGPFGPPPEEKKRTS). Residues 632–645 (TPHERKDFESKANH) show a composition bias toward basic and acidic residues. Phosphoserine occurs at positions 695 and 941. Positions 800-994 (GVPRHHRGEI…RVFDMIFLQG (195 aa)) constitute a Rab-GAP TBC domain. Phosphotyrosine is present on tyrosine 952. Position 1131 is a phosphothreonine (threonine 1131). Positions 1145–1159 (ELRRRSAEPSDREPE) are enriched in basic and acidic residues. The tract at residues 1145 to 1168 (ELRRRSAEPSDREPECTQPEPTGD) is disordered.

In terms of assembly, interacts with APPL2 (via BAR domain); interaction is dependent of TBC1D1 phosphorylation at Ser-235; interaction diminishes the phosphorylation of TBC1D1 at Thr-596, resulting in inhibition of SLC2A4/GLUT4 translocation and glucose uptake. Post-translationally, insulin-stimulated phosphorylation by AKT family kinases stimulates SLC2A4/GLUT4 translocation.

It is found in the nucleus. May act as a GTPase-activating protein for Rab family protein(s). May play a role in the cell cycle and differentiation of various tissues. Involved in the trafficking and translocation of GLUT4-containing vesicles and insulin-stimulated glucose uptake into cells. The polypeptide is TBC1 domain family member 1 (TBC1D1) (Homo sapiens (Human)).